We begin with the raw amino-acid sequence, 137 residues long: Small ribosomal subunit protein eS6 (137 aa).

Acidic residues predominate over residues 114 to 127; it reads LPVEEAPAEDAPES. The tract at residues 114-137 is disordered; sequence LPVEEAPAEDAPESAEEKSEDKKE. Positions 128 to 137 are enriched in basic and acidic residues; that stretch reads AEEKSEDKKE.

This sequence belongs to the eukaryotic ribosomal protein eS6 family.

This chain is Small ribosomal subunit protein eS6, found in Nitrosopumilus maritimus (strain SCM1).